The chain runs to 273 residues: Putative expansin-B2 (273 aa).

An N-terminal signal peptide occupies residues 1–29; sequence MTILVVDRYYMLMNLLFALTCLLLNLTHC. N-linked (GlcNAc...) asparagine glycosylation is present at N36. In terms of domain architecture, Expansin-like EG45 spans 65–173; sequence GGACGYGNAV…KKVECNYIGK (109 aa). Intrachain disulfides connect C68/C97, C100/C168, and C105/C111. Residues 186–269 enclose the Expansin-like CBD domain; the sequence is NSFAVLVAYV…NWQPGAIYKS (84 aa).

The protein belongs to the expansin family. Expansin B subfamily.

The protein resides in the secreted. The protein localises to the cell wall. It is found in the membrane. In terms of biological role, may cause loosening and extension of plant cell walls by disrupting non-covalent bonding between cellulose microfibrils and matrix glucans. No enzymatic activity has been found. This Arabidopsis thaliana (Mouse-ear cress) protein is Putative expansin-B2 (EXPB2).